The chain runs to 502 residues: ATP synthase subunit alpha (502 aa).

Residue Gly-169–Thr-176 coordinates ATP.

This sequence belongs to the ATPase alpha/beta chains family. As to quaternary structure, F-type ATPases have 2 components, CF(1) - the catalytic core - and CF(0) - the membrane proton channel. CF(1) has five subunits: alpha(3), beta(3), gamma(1), delta(1), epsilon(1). CF(0) has three main subunits: a(1), b(2) and c(9-12). The alpha and beta chains form an alternating ring which encloses part of the gamma chain. CF(1) is attached to CF(0) by a central stalk formed by the gamma and epsilon chains, while a peripheral stalk is formed by the delta and b chains.

The protein localises to the cell membrane. It carries out the reaction ATP + H2O + 4 H(+)(in) = ADP + phosphate + 5 H(+)(out). Produces ATP from ADP in the presence of a proton gradient across the membrane. The alpha chain is a regulatory subunit. In Lysinibacillus sphaericus (strain C3-41), this protein is ATP synthase subunit alpha.